The chain runs to 236 residues: Bax inhibitor 1 (236 aa).

Topologically, residues 1-29 (MNIFDRKINFDALFKFSHITPSTQQHLKK) are cytoplasmic. Lys7 participates in a covalent cross-link: Glycyl lysine isopeptide (Lys-Gly) (interchain with G-Cter in ubiquitin). The chain crosses the membrane as a helical span at residues 30 to 50 (VYASFALCMFVAAAGAYIHVV). Over 51–52 (TH) the chain is Lumenal. Residues 53-73 (FIQAGLLSALGSLGLMIWLMA) traverse the membrane as a helical segment. The Cytoplasmic segment spans residues 74 to 86 (TPHSHETEQKRLG). A helical membrane pass occupies residues 87–107 (LLAGFAFLTGVGLGPALDLCI). Residues 108-112 (AINPS) are Lumenal-facing. Residues 113–133 (ILPTAFMGTAMIFTCFTLSAL) traverse the membrane as a helical segment. The Cytoplasmic segment spans residues 134-139 (YARRRS). The helical transmembrane segment at 140–160 (YLFLGGILMSAMSLMLLSSLG) threads the bilayer. Residues 161-166 (NLFFGS) are Lumenal-facing. The helical transmembrane segment at 167 to 187 (VWLFQANLYMGLVVMCGFVLF) threads the bilayer. Residues 188–206 (DTQLIIEKAENGDKDYIWH) lie on the Cytoplasmic side of the membrane. The segment at residues 207–227 (CVDLFLDFVTLFRKLMMILAM) is an intramembrane region (helical). Over 228 to 236 (NEKDKKKKK) the chain is Cytoplasmic.

This sequence belongs to the BI1 family. In terms of assembly, interacts with BCL2 and BCL2L1. Interacts with ERN1. Post-translationally, ubiquitinated by BFAR, leading to proteasomal degradation.

It is found in the endoplasmic reticulum membrane. Functionally, endoplasmic reticulum (ER)-resident protein that confers cellular protection as an anti-apoptotic protein by limiting multiple stress-inducing pathways surrounding the endoplasmic reticulum and mitochondria. Inhibits the activities of the key sensor for the endoplasmic reticulum unfolded protein response IRE1alpha/ERN1 both directly and by blocking BAX/BAK binding. Modulates ER calcium homeostasis by acting as a calcium-leak channel. Negatively regulates autophagy and autophagosome formation, especially during periods of nutrient deprivation, and reduces cell survival during starvation. The chain is Bax inhibitor 1 (TMBIM6) from Bos taurus (Bovine).